The sequence spans 462 residues: Glycoprotein endo-alpha-1,2-mannosidase (462 aa).

The Cytoplasmic segment spans residues M1–T8. The chain crosses the membrane as a helical; Signal-anchor for type II membrane protein span at residues C9–L29. Residues R30–S462 are Lumenal-facing. A catalytic region spans residues D60 to S462.

Belongs to the glycosyl hydrolase 99 family. In terms of processing, undergoes proteolytic cleavage in the C-terminal region.

Its subcellular location is the golgi apparatus membrane. It carries out the reaction N-{alpha-Glc-(1-&gt;3)-alpha-Man-(1-&gt;2)-alpha-Man-(1-&gt;2)-alpha-Man-(1-&gt;3)-[alpha-Man-(1-&gt;2)-alpha-Man-(1-&gt;3)-[alpha-Man-(1-&gt;2)-alpha-Man-(1-&gt;6)]-alpha-Man-(1-&gt;6)]-beta-Man-(1-&gt;4)-beta-GlcNAc-(1-&gt;4)-beta-GlcNAc}-L-asparaginyl-[protein] + H2O = alpha-D-glucosyl-(1-&gt;3)-D-mannopyranose + N(4)-{alpha-D-Man-(1-&gt;2)-alpha-D-Man-(1-&gt;3)-[alpha-D-Man-(1-&gt;2)-alpha-D-Man-(1-&gt;3)-[alpha-D-Man-(1-&gt;2)-alpha-D-Man-(1-&gt;6)]-alpha-D-Man-(1-&gt;6)]-beta-D-Man-(1-&gt;4)-beta-D-GlaNAc-(1-&gt;4)-beta-D-GlcNAc}-L-asparaginyl-[protein] (N-glucan mannose isomer 8A1,2,3B1,2). This chain is Glycoprotein endo-alpha-1,2-mannosidase (MANEA), found in Pongo abelii (Sumatran orangutan).